A 360-amino-acid chain; its full sequence is Phospho-N-acetylmuramoyl-pentapeptide-transferase (360 aa).

10 helical membrane passes run 27–47, 71–91, 93–113, 134–154, 168–188, 199–219, 239–259, 262–282, 288–308, and 337–357; these read GALITSALIVFIFGPTIINSL, TPTMGGLMILSGIIGSSLLWA, LSSIYVWVVLLVTLGFGSIGF, LGLEFIIAGIAAWVIMHNGQA, FIINLGWFFIPFSCFVIVGAG, GLAIVPIMIAAASFGVIAYLS, LAVVLGAVIGAGLGFLWFNAP, AIFMGDTGSLAMGGLIGTVAV, IVLVIVGGLFVVEILSVIIQV, and QVVIRFWIIAVILALVGLSTL.

This sequence belongs to the glycosyltransferase 4 family. MraY subfamily. Mg(2+) is required as a cofactor.

The protein localises to the cell inner membrane. It carries out the reaction UDP-N-acetyl-alpha-D-muramoyl-L-alanyl-gamma-D-glutamyl-meso-2,6-diaminopimeloyl-D-alanyl-D-alanine + di-trans,octa-cis-undecaprenyl phosphate = di-trans,octa-cis-undecaprenyl diphospho-N-acetyl-alpha-D-muramoyl-L-alanyl-D-glutamyl-meso-2,6-diaminopimeloyl-D-alanyl-D-alanine + UMP. It participates in cell wall biogenesis; peptidoglycan biosynthesis. Catalyzes the initial step of the lipid cycle reactions in the biosynthesis of the cell wall peptidoglycan: transfers peptidoglycan precursor phospho-MurNAc-pentapeptide from UDP-MurNAc-pentapeptide onto the lipid carrier undecaprenyl phosphate, yielding undecaprenyl-pyrophosphoryl-MurNAc-pentapeptide, known as lipid I. This Mesorhizobium japonicum (strain LMG 29417 / CECT 9101 / MAFF 303099) (Mesorhizobium loti (strain MAFF 303099)) protein is Phospho-N-acetylmuramoyl-pentapeptide-transferase.